A 416-amino-acid polypeptide reads, in one-letter code: Cyclic dinucleotide synthase CdnG (416 aa).

Ser-72 lines the GTP pocket. Residues Asp-89, Asp-91, and Asp-140 contribute to the active site. Asp-91 is a GTP binding site. Position 91 (Asp-91) interacts with Mg(2+). A disordered region spans residues 145–167 (RRRAPKEKEGEIPHAKKGTRSDP). Residues 150–167 (KEKEGEIPHAKKGTRSDP) are compositionally biased toward basic and acidic residues. GTP is bound by residues Lys-236, Ser-253, Glu-305, Arg-306, and Asp-309.

The protein belongs to the CD-NTase family. G10 subfamily. The cofactor is Mg(2+).

The catalysed reaction is UTP + GTP = 3',3'-cGMP-UMP + 2 diphosphate. It catalyses the reaction GTP + ATP = 3',3'-cGAMP + 2 diphosphate. It carries out the reaction 2 ATP = 3',3'-c-di-AMP + 2 diphosphate. Its function is as follows. Cyclic nucleotide synthase (second messenger synthase) of a CBASS antivirus system. CBASS (cyclic oligonucleotide-based antiphage signaling system) provides immunity against bacteriophage. The CD-NTase protein synthesizes cyclic nucleotides in response to infection; these serve as specific second messenger signals. The signals activate a diverse range of effectors, leading to bacterial cell death and thus abortive phage infection. A type II-short CBASS system. Cyclic dinucleotide synthase that catalyzes the synthesis of predominantly 3'3'-cGMP-UMP, followed by 3'3'-cGAMP and c-di-AMP in a reaction mixture of ATP, CTP, GTP and UTP. The cyclic nucleotide products are second messengers that activate the CBASS Cap5 effector nuclease, leading to DNA degradation and probably cell death. Cyclic nucleotides do not activate the effector equally; reactions with ATP/GTP, ATP/UTP and ATP alone activate Cap5, whereas reaction with GTP/UTP (the major in vitro product) do not. The polypeptide is Cyclic dinucleotide synthase CdnG (Bradyrhizobium diazoefficiens (strain JCM 10833 / BCRC 13528 / IAM 13628 / NBRC 14792 / USDA 110)).